The following is a 296-amino-acid chain: Glycine--tRNA ligase alpha subunit (296 aa).

Belongs to the class-II aminoacyl-tRNA synthetase family. In terms of assembly, tetramer of two alpha and two beta subunits.

Its subcellular location is the cytoplasm. It carries out the reaction tRNA(Gly) + glycine + ATP = glycyl-tRNA(Gly) + AMP + diphosphate. In Exiguobacterium sibiricum (strain DSM 17290 / CCUG 55495 / CIP 109462 / JCM 13490 / 255-15), this protein is Glycine--tRNA ligase alpha subunit.